The sequence spans 661 residues: UvrABC system protein B (661 aa).

The Helicase ATP-binding domain maps to 25–178 (EGILKGEKFQ…DEVIRELIRM (154 aa)). 38–45 (GVTGSGKT) contributes to the ATP binding site. The Beta-hairpin motif lies at 91–114 (YYDYYQPEAYIPETDTYIEKDSSI). One can recognise a Helicase C-terminal domain in the interval 429-591 (QIDHLIGEIR…IVPQTVRKGI (163 aa)). In terms of domain architecture, UVR spans 625–660 (EEYIKELEQQMKRFAIELEFEKAAKIRDKIFELKKL).

Belongs to the UvrB family. In terms of assembly, forms a heterotetramer with UvrA during the search for lesions. Interacts with UvrC in an incision complex.

It is found in the cytoplasm. Its function is as follows. The UvrABC repair system catalyzes the recognition and processing of DNA lesions. A damage recognition complex composed of 2 UvrA and 2 UvrB subunits scans DNA for abnormalities. Upon binding of the UvrA(2)B(2) complex to a putative damaged site, the DNA wraps around one UvrB monomer. DNA wrap is dependent on ATP binding by UvrB and probably causes local melting of the DNA helix, facilitating insertion of UvrB beta-hairpin between the DNA strands. Then UvrB probes one DNA strand for the presence of a lesion. If a lesion is found the UvrA subunits dissociate and the UvrB-DNA preincision complex is formed. This complex is subsequently bound by UvrC and the second UvrB is released. If no lesion is found, the DNA wraps around the other UvrB subunit that will check the other stand for damage. This is UvrABC system protein B from Caldicellulosiruptor saccharolyticus (strain ATCC 43494 / DSM 8903 / Tp8T 6331).